A 269-amino-acid chain; its full sequence is Putative hydro-lyase Aave_3512 (269 aa).

The protein belongs to the D-glutamate cyclase family.

The sequence is that of Putative hydro-lyase Aave_3512 from Paracidovorax citrulli (strain AAC00-1) (Acidovorax citrulli).